A 398-amino-acid polypeptide reads, in one-letter code: Phosphoglycerate kinase (398 aa).

Residues 21–23 (DFN), Arg-36, 59–62 (HLGR), Arg-119, and Arg-157 contribute to the substrate site. ATP is bound by residues Lys-208, Gly-296, Glu-327, and 354 to 357 (GGDS).

This sequence belongs to the phosphoglycerate kinase family. Monomer.

Its subcellular location is the cytoplasm. The catalysed reaction is (2R)-3-phosphoglycerate + ATP = (2R)-3-phospho-glyceroyl phosphate + ADP. The protein operates within carbohydrate degradation; glycolysis; pyruvate from D-glyceraldehyde 3-phosphate: step 2/5. This is Phosphoglycerate kinase from Streptococcus pyogenes serotype M18 (strain MGAS8232).